Here is a 197-residue protein sequence, read N- to C-terminus: Outer-membrane lipoprotein LolB (197 aa).

Residues 1–20 form the signal peptide; it reads MNRSRRLALFCLGAPLLLQA. A lipid anchor (N-palmitoyl cysteine) is attached at cysteine 21. Residue cysteine 21 is the site of S-diacylglycerol cysteine attachment.

The protein belongs to the LolB family. Monomer.

It localises to the cell outer membrane. Functionally, plays a critical role in the incorporation of lipoproteins in the outer membrane after they are released by the LolA protein. The protein is Outer-membrane lipoprotein LolB of Cupriavidus necator (strain ATCC 17699 / DSM 428 / KCTC 22496 / NCIMB 10442 / H16 / Stanier 337) (Ralstonia eutropha).